A 349-amino-acid chain; its full sequence is Ureidoglycolate dehydrogenase (NAD(+)) (349 aa).

Residue His116 is the Proton acceptor of the active site. NAD(+)-binding positions include Ser140, 174 to 176 (DMA), Lys224, and 306 to 308 (GQD).

The protein belongs to the LDH2/MDH2 oxidoreductase family. As to quaternary structure, homodimer.

The protein localises to the cytoplasm. It carries out the reaction (S)-ureidoglycolate + NAD(+) = N-carbamoyl-2-oxoglycine + NADH + H(+). It functions in the pathway nitrogen metabolism; (S)-allantoin degradation; oxalurate from (S)-ureidoglycolate: step 1/1. AllD plays a pivotal role as a metabolic branch-point enzyme in nitrogen utilization via the assimilation of allantoin. It is able to utilize allantoin as a sole source of nitrogen under anaerobic conditions. Catalyzes the oxidation of ureidoglycolate to oxalurate. The chain is Ureidoglycolate dehydrogenase (NAD(+)) from Escherichia coli (strain K12).